The sequence spans 131 residues: ER membrane protein complex subunit 5 (131 aa).

Over 1–3 the chain is Cytoplasmic; the sequence is MAP. Residues 4–22 form a helical membrane-spanning segment; that stretch reads SLWKGLVGIGLFALAHAAF. The Lumenal portion of the chain corresponds to 23–43; sequence SAAQHRSYMRLTEKEDESLPI. The chain crosses the membrane as a helical span at residues 44-63; the sequence is DIVLQTLLAFAVTCYGIVHI. Residues 64 to 131 are Cytoplasmic-facing; the sequence is AGEFKDMDAT…KLRKLESLRR (68 aa). Position 120 is a phosphoserine (S120).

This sequence belongs to the membrane magnesium transporter (TC 1.A.67) family. As to quaternary structure, component of the ER membrane protein complex (EMC).

Its subcellular location is the endoplasmic reticulum membrane. The protein resides in the golgi apparatus membrane. The protein localises to the early endosome membrane. Part of the endoplasmic reticulum membrane protein complex (EMC) that enables the energy-independent insertion into endoplasmic reticulum membranes of newly synthesized membrane proteins. Preferentially accommodates proteins with transmembrane domains that are weakly hydrophobic or contain destabilizing features such as charged and aromatic residues. Involved in the cotranslational insertion of multi-pass membrane proteins in which stop-transfer membrane-anchor sequences become ER membrane spanning helices. It is also required for the post-translational insertion of tail-anchored/TA proteins in endoplasmic reticulum membranes. By mediating the proper cotranslational insertion of N-terminal transmembrane domains in an N-exo topology, with translocated N-terminus in the lumen of the ER, controls the topology of multi-pass membrane proteins like the G protein-coupled receptors. By regulating the insertion of various proteins in membranes, it is indirectly involved in many cellular processes. May be involved in Mg(2+) transport. The protein is ER membrane protein complex subunit 5 of Homo sapiens (Human).